The sequence spans 325 residues: Putative ankyrin repeat protein RF_0011 (325 aa).

ANK repeat units follow at residues 63–94 (NGNTTLILAADAGLEEACLKLIPKMSDEAINM), 99–130 (RGQPALVKAMWRDLDSVCIELIPKMSKENINA), and 134–164 (CGRTLLMLAAKKGMTTVSKMFINLMPPEMII).

The polypeptide is Putative ankyrin repeat protein RF_0011 (Rickettsia felis (strain ATCC VR-1525 / URRWXCal2) (Rickettsia azadi)).